Here is a 567-residue protein sequence, read N- to C-terminus: 2-succinyl-5-enolpyruvyl-6-hydroxy-3-cyclohexene-1-carboxylate synthase (567 aa).

This sequence belongs to the TPP enzyme family. MenD subfamily. In terms of assembly, homodimer. Mg(2+) is required as a cofactor. Requires Mn(2+) as cofactor. The cofactor is thiamine diphosphate.

It carries out the reaction isochorismate + 2-oxoglutarate + H(+) = 5-enolpyruvoyl-6-hydroxy-2-succinyl-cyclohex-3-ene-1-carboxylate + CO2. Its pathway is quinol/quinone metabolism; 1,4-dihydroxy-2-naphthoate biosynthesis; 1,4-dihydroxy-2-naphthoate from chorismate: step 2/7. It participates in quinol/quinone metabolism; menaquinone biosynthesis. In terms of biological role, catalyzes the thiamine diphosphate-dependent decarboxylation of 2-oxoglutarate and the subsequent addition of the resulting succinic semialdehyde-thiamine pyrophosphate anion to isochorismate to yield 2-succinyl-5-enolpyruvyl-6-hydroxy-3-cyclohexene-1-carboxylate (SEPHCHC). In Yersinia pestis bv. Antiqua (strain Angola), this protein is 2-succinyl-5-enolpyruvyl-6-hydroxy-3-cyclohexene-1-carboxylate synthase.